Reading from the N-terminus, the 166-residue chain is Probable glucosamine 6-phosphate N-acetyltransferase 2 (166 aa).

The 146-residue stretch at 21-166 (VQIRRLEATD…EKGVQMAIYF (146 aa)) folds into the N-acetyltransferase domain. Substrate contacts are provided by residues Ser-43, 93-96 (KFLR), and 105-107 (EDV). Acetyl-CoA is bound at residue 115–120 (GRGLGL). A substrate-binding site is contributed by 136-137 (YK). 150–152 (YAK) serves as a coordination point for acetyl-CoA.

This sequence belongs to the acetyltransferase family. GNA1 subfamily. As to quaternary structure, homodimer.

The protein localises to the endoplasmic reticulum membrane. The catalysed reaction is D-glucosamine 6-phosphate + acetyl-CoA = N-acetyl-D-glucosamine 6-phosphate + CoA + H(+). Its pathway is nucleotide-sugar biosynthesis; UDP-N-acetyl-alpha-D-glucosamine biosynthesis; N-acetyl-alpha-D-glucosamine 1-phosphate from alpha-D-glucosamine 6-phosphate (route I): step 1/2. Acetyltransferase involved in UDP-N-acetylglucosamine (UDP-GlcNAc) biosynthesis. UDP-GlcNAc is an essential metabolite that serves as an initial sugar donor of N-glycan synthesis and thus plays an important role in protein and lipid glycosylation. The chain is Probable glucosamine 6-phosphate N-acetyltransferase 2 from Oryza sativa subsp. japonica (Rice).